A 420-amino-acid chain; its full sequence is uncharacterized protein (420 aa).

The 342-residue stretch at glycine 79 to serine 420 folds into the YcaO domain.

This is an uncharacterized protein from Rhizobium leguminosarum bv. trifolii.